We begin with the raw amino-acid sequence, 214 residues long: Large ribosomal subunit protein uL16 (214 aa).

Position 32 is a citrulline (R32). A Glycyl lysine isopeptide (Lys-Gly) (interchain with G-Cter in SUMO2) cross-link involves residue K175. Residue K188 forms a Glycyl lysine isopeptide (Lys-Gly) (interchain with G-Cter in ubiquitin) linkage.

Belongs to the universal ribosomal protein uL16 family. As to quaternary structure, component of the large ribosomal subunit. Mature ribosomes consist of a small (40S) and a large (60S) subunit. The 40S subunit contains about 33 different proteins and 1 molecule of RNA (18S). The 60S subunit contains about 49 different proteins and 3 molecules of RNA (28S, 5.8S and 5S). Post-translationally, citrullinated by PADI4. Ufmylated by UFL1.

It is found in the cytoplasm. In terms of biological role, component of the large ribosomal subunit. Plays a role in the formation of actively translating ribosomes. May play a role in the embryonic brain development. The sequence is that of Large ribosomal subunit protein uL16 from Bos taurus (Bovine).